The primary structure comprises 554 residues: Hydroxylamine reductase (554 aa).

[2Fe-2S] cluster is bound by residues C3, C6, C18, and C25. Residues H252, E276, C320, C408, C436, C461, E495, and K497 each contribute to the hybrid [4Fe-2O-2S] cluster site. The residue at position 408 (C408) is a Cysteine persulfide.

Belongs to the HCP family. Requires [2Fe-2S] cluster as cofactor. It depends on hybrid [4Fe-2O-2S] cluster as a cofactor.

The protein localises to the cytoplasm. It catalyses the reaction A + NH4(+) + H2O = hydroxylamine + AH2 + H(+). Functionally, catalyzes the reduction of hydroxylamine to form NH(3) and H(2)O. The chain is Hydroxylamine reductase from Shewanella oneidensis (strain ATCC 700550 / JCM 31522 / CIP 106686 / LMG 19005 / NCIMB 14063 / MR-1).